We begin with the raw amino-acid sequence, 2343 residues long: Coagulation factor VIII (2343 aa).

Positions M1 to S19 are cleaved as a signal peptide. 2 consecutive Plastocyanin-like domains span residues A20 to C199 and E207 to C343. One can recognise an F5/8 type A 1 domain in the interval A20 to C343. N233 and N253 each carry an N-linked (GlcNAc...) asparagine glycan. Y359 and Y408 each carry sulfotyrosine. Plastocyanin-like domains lie at K393 to C567 and N577 to C724. The 332-residue stretch at K393–C724 folds into the F5/8 type A 2 domain. N-linked (GlcNAc...) asparagine glycosylation occurs at N595. A sulfotyrosine mark is found at Y731, Y732, and Y736. Polar residues predominate over residues P752 to H761. Disordered regions lie at residues P752 to T774 and A828 to E865. The tract at residues S754–R1659 is b. 2 stretches are compositionally biased toward basic and acidic residues: residues A828 to G841 and P850 to T861. Residues N877, N921, N937, N938, N956, N1007, N1019, N1037, N1062, N1069, and N1080 are each glycosylated (N-linked (GlcNAc...) asparagine). Residues G1124–S1147 form a disordered region. Residues K1125–S1147 show a composition bias toward polar residues. N-linked (GlcNAc...) asparagine glycosylation is found at N1179, N1193, N1275, N1290, N1308, N1341, N1391, N1419, N1429, N1453, N1547, and N1618. Polar residues predominate over residues T1302–I1314. The tract at residues T1302 to R1326 is disordered. A disordered region spans residues K1592–Q1632. 2 positions are modified to sulfotyrosine: Y1675 and Y1691. 2 Plastocyanin-like domains span residues K1705–C1869 and G1879–C2032. The 328-residue stretch at K1705–C2032 folds into the F5/8 type A 3 domain. N1821 carries an N-linked (GlcNAc...) asparagine glycan. F5/8 type C domains lie at C2032 to C2180 and C2185 to C2337. Intrachain disulfides connect C2032/C2180 and C2185/C2337. Residues N2129 and N2281 are each glycosylated (N-linked (GlcNAc...) asparagine).

It belongs to the multicopper oxidase family. In terms of assembly, interacts with vWF. vWF binding is essential for the stabilization of F8 in circulation. In terms of processing, proteolytically cleaved by cathepsin CTSG to produce a partially activated form.

The protein resides in the secreted. It localises to the extracellular space. Functionally, factor VIII, along with calcium and phospholipid, acts as a cofactor for factor IXa when it converts factor X to the activated form, factor Xa. This chain is Coagulation factor VIII (F8), found in Canis lupus familiaris (Dog).